Reading from the N-terminus, the 507-residue chain is Probable malate:quinone oxidoreductase 2 (507 aa).

This sequence belongs to the MQO family. FAD serves as cofactor.

It catalyses the reaction (S)-malate + a quinone = a quinol + oxaloacetate. Its pathway is carbohydrate metabolism; tricarboxylic acid cycle; oxaloacetate from (S)-malate (quinone route): step 1/1. The protein is Probable malate:quinone oxidoreductase 2 of Pseudomonas aeruginosa (strain ATCC 15692 / DSM 22644 / CIP 104116 / JCM 14847 / LMG 12228 / 1C / PRS 101 / PAO1).